The primary structure comprises 702 residues: Methionine--tRNA ligase (702 aa).

The 'HIGH' region motif lies at 23–33 (PYANGPLHLGH). 4 residues coordinate Zn(2+): C154, C157, C167, and C170. Positions 341 to 345 (KMSKS) match the 'KMSKS' region motif. K344 is a binding site for ATP. The segment at 562-593 (LAPPPASAKQQNASMSNTAPPPTAEEPETTAP) is disordered. The segment covering 569–578 (AKQQNASMSN) has biased composition (polar residues). Residues 599–702 (DFAKLDLRIG…SSAQPGMPVR (104 aa)) form the tRNA-binding domain.

Belongs to the class-I aminoacyl-tRNA synthetase family. MetG type 1 subfamily. In terms of assembly, homodimer. It depends on Zn(2+) as a cofactor.

It is found in the cytoplasm. The enzyme catalyses tRNA(Met) + L-methionine + ATP = L-methionyl-tRNA(Met) + AMP + diphosphate. Functionally, is required not only for elongation of protein synthesis but also for the initiation of all mRNA translation through initiator tRNA(fMet) aminoacylation. The chain is Methionine--tRNA ligase from Xylella fastidiosa (strain M23).